The chain runs to 157 residues: MAARLRPLLALLALAALCPQETLAQPLPTTDTWKSEGQVVDSYEASAQLCWADYREHMDLLEKDWCNWTVISRPYSALRDCLEVEAEVFSLGFPNPLAERVIFETHQLHFSNCSLEQPTLCDPPEDVLLAMIIAPICLIPFFVTLVVWRSKGTELKT.

An N-terminal signal peptide occupies residues 1–24; the sequence is MAARLRPLLALLALAALCPQETLA. The Extracellular portion of the chain corresponds to 25–125; sequence QPLPTTDTWK…EQPTLCDPPE (101 aa). Disulfide bonds link Cys-50–Cys-81 and Cys-66–Cys-113. 2 N-linked (GlcNAc...) asparagine glycosylation sites follow: Asn-67 and Asn-112. A helical transmembrane segment spans residues 126–147; it reads DVLLAMIIAPICLIPFFVTLVV. Residues 148–157 are Cytoplasmic-facing; that stretch reads WRSKGTELKT.

It belongs to the RAMP family. Heterodimer of CALCRL and RAMP2; the interaction forms the receptor complex for adrenomedullin/ADM. Heterodimer of CALCR and RAMP2; interaction forms the AMYR2 receptor complex for calcitonin/CALC and amylin/IAPP.

It localises to the cell membrane. Functionally, accessory protein that interacts with and modulates the function of G-protein coupled receptors including calcitonin gene-related peptide type 1 receptor (CALCRL) and calcitonin receptor (CALCR). Required for the transport of CALCRL to the plasma membrane. Together with CALCRL, form a receptor complex for adrenomedullin/ADM. Together with CALCR, act as a receptor complex for calcitonin/CT/CALC. Together with CALCR, also act as a receptor complex for amylin/IAPP. The polypeptide is Receptor activity-modifying protein 2 (RAMP2) (Cavia porcellus (Guinea pig)).